The chain runs to 360 residues: Mitogen-activated protein kinase 1 (360 aa).

At A2 the chain carries N-acetylalanine. Residues 25 to 313 (YTNLSYIGEG…VEQALAHPYL (289 aa)) form the Protein kinase domain. A Phosphoserine; by SGK1 modification is found at S29. Residues 31–39 (IGEGAYGMV) and K54 contribute to the ATP site. The active-site Proton acceptor is D149. The residue at position 185 (T185) is a Phosphothreonine; by MAP2K1 and MAP2K2. Positions 185–187 (TEY) match the TXY motif. The residue at position 187 (Y187) is a Phosphotyrosine; by MAP2K1 and MAP2K2. T190 carries the post-translational modification Phosphothreonine; by autocatalysis. Phosphoserine is present on residues S246, S248, and S284.

Belongs to the protein kinase superfamily. CMGC Ser/Thr protein kinase family. MAP kinase subfamily. Binds both upstream activators and downstream substrates in multimolecular complexes. Interacts with ADAM15, ARHGEF2, ARRB2, DAPK1 (via death domain), HSF4, IER3, IPO7, MKNK2, MORG1, NISCH, PEA15, SGK1, and isoform 1 of NEK2. Interacts (via phosphorylated form) with TPR (via C-terminal region and phosphorylated form); the interaction requires dimerization of MAPK1/ERK2 and increases following EGF stimulation. Interacts with MAP2K1. Interacts with DUSP6. Interacts (phosphorylated form) with CAV2 ('Tyr-19'-phosphorylated form); the interaction, promoted by insulin, leads to nuclear location and MAPK1 activation. MKNK2 isoform 1 binding prevents from dephosphorylation and inactivation. Interacts with DCC. The phosphorylated form interacts with PML. Interacts with STYX. Interacts with CDK2AP2. Interacts with CAVIN4. Interacts with DUSP7; the interaction enhances DUSP7 phosphatase activity. Interacts with GIT1; this interaction is necessary for MAPK1 localization to focal adhesions. Interacts with ZNF263. Interacts with phosphoglycerate kinase PGK1; the interaction is direct, occurs under hypoxic conditions, and promotes interaction between PGK1 and PIN1. Mg(2+) serves as cofactor. Dually phosphorylated on Thr-185 and Tyr-187, which activates the enzyme. Phosphorylated upon FLT3 and KIT signaling. Phosphorylation on Ser-29 by SGK1 results in its activation by enhancing its interaction with MAP2K1/MEK1 and MAP2K2/MEK2. Phosphorylation at Ser-246 and Ser-248 as well as autophosphorylation at Thr-190 promote nuclear localization. Ligand-activated ALK induces tyrosine phosphorylation. Dephosphorylated by PTPRJ at Tyr-187. Dephosphorylated by DUSP1 and DUSP2 at Thr-185 and Tyr-187. In terms of processing, ISGylated. Post-translationally, ubiquitinated by TRIM15 via 'Lys-63'-linked ubiquitination; leading to activation. Deubiquitinated by CYLD.

The protein resides in the nucleus. It is found in the cytoplasm. It localises to the cytoskeleton. The protein localises to the microtubule organizing center. Its subcellular location is the centrosome. The protein resides in the spindle. It is found in the membrane. It localises to the caveola. The protein localises to the cell junction. Its subcellular location is the focal adhesion. It catalyses the reaction L-seryl-[protein] + ATP = O-phospho-L-seryl-[protein] + ADP + H(+). The catalysed reaction is L-threonyl-[protein] + ATP = O-phospho-L-threonyl-[protein] + ADP + H(+). Phosphorylated by MAP2K1/MEK1 and MAP2K2/MEK2 on Thr-185 and Tyr-187 in response to external stimuli like insulin or NGF. Both phosphorylations are required for activity. This phosphorylation causes dramatic conformational changes, which enable full activation and interaction of MAPK1/ERK2 with its substrates. Phosphorylation on Ser-29 by SGK1 results in its activation by enhancing its interaction with MAP2K1/MEK1 and MAP2K2/MEK2. Dephosphorylated and inactivated by DUSP1, DUSP3, DUSP6 and DUSP9. Inactivated by pyrimidylpyrrole inhibitors. Its function is as follows. Serine/threonine kinase which acts as an essential component of the MAP kinase signal transduction pathway. MAPK1/ERK2 and MAPK3/ERK1 are the 2 MAPKs which play an important role in the MAPK/ERK cascade. They participate also in a signaling cascade initiated by activated KIT and KITLG/SCF. Depending on the cellular context, the MAPK/ERK cascade mediates diverse biological functions such as cell growth, adhesion, survival and differentiation through the regulation of transcription, translation, cytoskeletal rearrangements. The MAPK/ERK cascade also plays a role in initiation and regulation of meiosis, mitosis, and postmitotic functions in differentiated cells by phosphorylating a number of transcription factors. About 160 substrates have already been discovered for ERKs. Many of these substrates are localized in the nucleus, and seem to participate in the regulation of transcription upon stimulation. However, other substrates are found in the cytosol as well as in other cellular organelles, and those are responsible for processes such as translation, mitosis and apoptosis. Moreover, the MAPK/ERK cascade is also involved in the regulation of the endosomal dynamics, including lysosome processing and endosome cycling through the perinuclear recycling compartment (PNRC); as well as in the fragmentation of the Golgi apparatus during mitosis. The substrates include transcription factors (such as ATF2, BCL6, ELK1, ERF, FOS, HSF4 or SPZ1), cytoskeletal elements (such as CANX, CTTN, GJA1, MAP2, MAPT, PXN, SORBS3 or STMN1), regulators of apoptosis (such as BAD, BTG2, CASP9, DAPK1, IER3, MCL1 or PPARG), regulators of translation (such as EIF4EBP1 and FXR1) and a variety of other signaling-related molecules (like ARHGEF2, DCC, FRS2 or GRB10). Protein kinases (such as RAF1, RPS6KA1/RSK1, RPS6KA3/RSK2, RPS6KA2/RSK3, RPS6KA6/RSK4, SYK, MKNK1/MNK1, MKNK2/MNK2, RPS6KA5/MSK1, RPS6KA4/MSK2, MAPKAPK3 or MAPKAPK5) and phosphatases (such as DUSP1, DUSP4, DUSP6 or DUSP16) are other substrates which enable the propagation the MAPK/ERK signal to additional cytosolic and nuclear targets, thereby extending the specificity of the cascade. Mediates phosphorylation of TPR in response to EGF stimulation. May play a role in the spindle assembly checkpoint. Phosphorylates PML and promotes its interaction with PIN1, leading to PML degradation. Phosphorylates CDK2AP2. Phosphorylates phosphoglycerate kinase PGK1 under hypoxic conditions to promote its targeting to the mitochondrion and suppress the formation of acetyl-coenzyme A from pyruvate. In terms of biological role, acts as a transcriptional repressor. Binds to a [GC]AAA[GC] consensus sequence. Repress the expression of interferon gamma-induced genes. Seems to bind to the promoter of CCL5, DMP1, IFIH1, IFITM1, IRF7, IRF9, LAMP3, OAS1, OAS2, OAS3 and STAT1. Transcriptional activity is independent of kinase activity. The protein is Mitogen-activated protein kinase 1 of Bos taurus (Bovine).